The primary structure comprises 185 residues: ATP synthase subunit b 2 (185 aa).

A disordered region spans residues 1-23 (MAEGHGDAKGATAHTAADGGHKA). A compositionally biased stretch (low complexity) spans 9–18 (KGATAHTAAD). A helical membrane pass occupies residues 37 to 57 (LVSLTIAFVALYLIVSKIILP).

It belongs to the ATPase B chain family. F-type ATPases have 2 components, F(1) - the catalytic core - and F(0) - the membrane proton channel. F(1) has five subunits: alpha(3), beta(3), gamma(1), delta(1), epsilon(1). F(0) has three main subunits: a(1), b(2) and c(10-14). The alpha and beta chains form an alternating ring which encloses part of the gamma chain. F(1) is attached to F(0) by a central stalk formed by the gamma and epsilon chains, while a peripheral stalk is formed by the delta and b chains.

It localises to the cell inner membrane. Functionally, f(1)F(0) ATP synthase produces ATP from ADP in the presence of a proton or sodium gradient. F-type ATPases consist of two structural domains, F(1) containing the extramembraneous catalytic core and F(0) containing the membrane proton channel, linked together by a central stalk and a peripheral stalk. During catalysis, ATP synthesis in the catalytic domain of F(1) is coupled via a rotary mechanism of the central stalk subunits to proton translocation. Component of the F(0) channel, it forms part of the peripheral stalk, linking F(1) to F(0). The b'-subunit is a diverged and duplicated form of b found in plants and photosynthetic bacteria. In Rhodopseudomonas palustris (strain BisB5), this protein is ATP synthase subunit b 2 (atpF2).